A 54-amino-acid polypeptide reads, in one-letter code: MPQLNPNPWFSIMLLTWFTFSLLIQPKLLSFTLTNNPANKITTTKPTPWTWPWT.

Residues 8–24 (PWFSIMLLTWFTFSLLI) form a helical membrane-spanning segment.

This sequence belongs to the ATPase protein 8 family. As to quaternary structure, component of the ATP synthase complex composed at least of ATP5F1A/subunit alpha, ATP5F1B/subunit beta, ATP5MC1/subunit c (homooctomer), MT-ATP6/subunit a, MT-ATP8/subunit 8, ATP5ME/subunit e, ATP5MF/subunit f, ATP5MG/subunit g, ATP5MK/subunit k, ATP5MJ/subunit j, ATP5F1C/subunit gamma, ATP5F1D/subunit delta, ATP5F1E/subunit epsilon, ATP5PF/subunit F6, ATP5PB/subunit b, ATP5PD/subunit d, ATP5PO/subunit OSCP. ATP synthase complex consists of a soluble F(1) head domain (subunits alpha(3) and beta(3)) - the catalytic core - and a membrane F(0) domain - the membrane proton channel (subunits c, a, 8, e, f, g, k and j). These two domains are linked by a central stalk (subunits gamma, delta, and epsilon) rotating inside the F1 region and a stationary peripheral stalk (subunits F6, b, d, and OSCP).

The protein resides in the mitochondrion membrane. In terms of biological role, subunit 8, of the mitochondrial membrane ATP synthase complex (F(1)F(0) ATP synthase or Complex V) that produces ATP from ADP in the presence of a proton gradient across the membrane which is generated by electron transport complexes of the respiratory chain. ATP synthase complex consist of a soluble F(1) head domain - the catalytic core - and a membrane F(1) domain - the membrane proton channel. These two domains are linked by a central stalk rotating inside the F(1) region and a stationary peripheral stalk. During catalysis, ATP synthesis in the catalytic domain of F(1) is coupled via a rotary mechanism of the central stalk subunits to proton translocation. In vivo, can only synthesize ATP although its ATP hydrolase activity can be activated artificially in vitro. Part of the complex F(0) domain. This chain is ATP synthase F(0) complex subunit 8, found in Gallus gallus (Chicken).